A 408-amino-acid chain; its full sequence is FAD-dependent monooxygenase nscC (408 aa).

A signal peptide spans 1 to 20 (MAPPLPILIIGAGISGLTTA). The FAD site is built by E34 and A45. Residues N91 and N103 are each glycosylated (N-linked (GlcNAc...) asparagine). FAD is bound at residue R119. N170 and N231 each carry an N-linked (GlcNAc...) asparagine glycan. Residues D328 and G341 each coordinate FAD.

Belongs to the paxM FAD-dependent monooxygenase family. FAD serves as cofactor.

Its pathway is secondary metabolite biosynthesis. FAD-dependent monooxygenase; part of the gene cluster that mediates the biosynthesis of neosartoricin, a prenylated anthracenone that exhibits T-cell antiproliferative activity, suggestive of a physiological role as an immunosuppressive agent. The non-reducing polyketide synthase nscA probably synthesizes and cyclizes the decaketide backbone. The hydrolase nscB then mediates the product release through hydrolysis followed by spontaneous decarboxylation. The prenyltransferase nscD catalyzes the addition of the dimethylallyl group to the aromatic C5. The FAD-dependent monooxygenase nscC is then responsible for the stereospecific hydroxylation at C2. There is no gene encoding O-acetyltransferase in the nsc gene cluster; thus, the last step of 2-O-acetylation leading to neosartoricin may be catalyzed by an unidentified O-acetyltransferase. This chain is FAD-dependent monooxygenase nscC, found in Neosartorya fischeri (strain ATCC 1020 / DSM 3700 / CBS 544.65 / FGSC A1164 / JCM 1740 / NRRL 181 / WB 181) (Aspergillus fischerianus).